A 154-amino-acid chain; its full sequence is uncharacterized protein (154 aa).

Residues 1 to 33 form the signal peptide; the sequence is MTKRGIQAFAGGIILATAVLAAVFYLTDEDQAA.

This is an uncharacterized protein from Bacillus subtilis (strain 168).